The primary structure comprises 68 residues: UPF0253 protein VF_0662 (68 aa).

It belongs to the UPF0253 family.

The protein is UPF0253 protein VF_0662 of Aliivibrio fischeri (strain ATCC 700601 / ES114) (Vibrio fischeri).